Consider the following 859-residue polypeptide: Low-density lipoprotein receptor-related protein 12 (859 aa).

An N-terminal signal peptide occupies residues 1 to 32 (MACRWSTKESPRWRSALLLLFLAGVYGNGALA). Topologically, residues 33–492 (EHSENVHISG…ENCPVIVPTR (460 aa)) are extracellular. Intrachain disulfides connect Cys-47–Cys-76 and Cys-103–Cys-122. The region spanning 47–159 (CGETPEQIRA…KGFRLAYFSG (113 aa)) is the CUB 1 domain. Asn-75 carries N-linked (GlcNAc...) asparagine glycosylation. N-linked (GlcNAc...) asparagine glycosylation is present at Asn-146. LDL-receptor class A domains are found at residues 165–201 (NCAC…EICA) and 214–255 (PCAY…IDCD). Disulfide bonds link Cys-166-Cys-178, Cys-173-Cys-191, Cys-185-Cys-200, Cys-215-Cys-232, Cys-222-Cys-245, Cys-239-Cys-254, and Cys-259-Cys-285. The 114-residue stretch at 259-372 (CGQWLKYFYG…RGFNATYQVD (114 aa)) folds into the CUB 2 domain. N-linked (GlcNAc...) asparagine glycosylation is found at Asn-284 and Asn-366. LDL-receptor class A domains are found at residues 374–411 (FCLP…TNCT), 412–449 (MCQK…KNCF), and 450–486 (FCQP…ENCP). 9 disulfide bridges follow: Cys-375–Cys-388, Cys-382–Cys-401, Cys-395–Cys-410, Cys-413–Cys-426, Cys-420–Cys-439, Cys-433–Cys-448, Cys-451–Cys-463, Cys-458–Cys-476, and Cys-470–Cys-485. N-linked (GlcNAc...) asparagine glycosylation is present at Asn-409. A glycan (N-linked (GlcNAc...) asparagine) is linked at Asn-441. The chain crosses the membrane as a helical span at residues 493–513 (VITAAVIGSLICGLLLVIALG). Over 514–859 (CTCKLYSLRM…TSDDEALLLC (346 aa)) the chain is Cytoplasmic. Disordered stretches follow at residues 623–678 (ADGD…LPQK), 693–723 (ASSS…SPAR), 748–770 (SSLS…REDD), and 801–823 (DQGQ…SNRD). Polar residues-rich tracts occupy residues 748-757 (SSLSQNQSPL) and 801-814 (DQGQ…NATN).

This sequence belongs to the LDLR family. As to quaternary structure, may interact with RACK1, ZFYVE9 and NMRK2. Widely expressed in heart, skeletal muscle, brain, lung, placenta and pancreas, but not in tissues consisting of a large number of epithelial cells, such as liver and kidney. Expressed at very low levels in a number of tumor-derived cell lines.

It localises to the membrane. The protein resides in the coated pit. Its function is as follows. Probable receptor, which may be involved in the internalization of lipophilic molecules and/or signal transduction. May act as a tumor suppressor. The polypeptide is Low-density lipoprotein receptor-related protein 12 (LRP12) (Homo sapiens (Human)).